Reading from the N-terminus, the 330-residue chain is Fructose-1,6-bisphosphatase class 1 (330 aa).

Positions 84, 103, 105, and 106 each coordinate Mg(2+). Residues 106–109 (DGSS), Asn196, and Lys262 each bind substrate. Residue Glu268 coordinates Mg(2+).

Belongs to the FBPase class 1 family. As to quaternary structure, homotetramer. Requires Mg(2+) as cofactor.

The protein resides in the cytoplasm. It catalyses the reaction beta-D-fructose 1,6-bisphosphate + H2O = beta-D-fructose 6-phosphate + phosphate. It functions in the pathway carbohydrate biosynthesis; gluconeogenesis. This is Fructose-1,6-bisphosphatase class 1 from Shewanella sp. (strain MR-7).